A 330-amino-acid chain; its full sequence is Glucosyltransferase 3 (330 aa).

Thr16 is a binding site for UDP. The interval 106 to 111 is substrate protein-binding loop; the sequence is MFSGNF. UDP is bound by residues Arg179, 211-214, and 244-249; these read YRPD and SYKLGS.

This sequence belongs to the Gtf3 glucosyltransferase family. Homotetramer; a dimer of dimers. The cofactor is In vitro glycosyltransferase activity is metal-independent..

The protein operates within protein modification; protein glycosylation. Required for polymorphic O-glycosylation of the serine-rich repeat protein Fap1. Catalyzes the second step in glycosylation of the serine-rich repeat protein in this bacteria. Transfers glucose from UDP-glucose to the terminal GlcNAc moiety of 3-O-(N-acetyl-alpha-D-glucosaminyl)-L-seryl-[protein] which results from the first glycosylation step of Fap1; does not use other sugar nucleotides as substrates. The chain is Glucosyltransferase 3 from Streptococcus parasanguinis.